Reading from the N-terminus, the 272-residue chain is Undecaprenyl-diphosphatase (272 aa).

A run of 8 helical transmembrane segments spans residues 4-24 (FEVI…FLPI), 43-63 (GGRV…CWLY), 86-106 (ISVL…VDFI), 109-129 (VLFS…IIFW), 145-165 (ITFK…IPGT), 186-206 (TEFS…FDLI), 222-242 (VGFV…VLFV), and 249-269 (VFAW…MFFN).

Belongs to the UppP family.

The protein resides in the cell inner membrane. It catalyses the reaction di-trans,octa-cis-undecaprenyl diphosphate + H2O = di-trans,octa-cis-undecaprenyl phosphate + phosphate + H(+). Functionally, catalyzes the dephosphorylation of undecaprenyl diphosphate (UPP). Confers resistance to bacitracin. The polypeptide is Undecaprenyl-diphosphatase (Acinetobacter baumannii (strain AB307-0294)).